Consider the following 265-residue polypeptide: Basic leucine zipper 6 (265 aa).

Disordered regions lie at residues Met1–Gly24 and Leu77–Lys139. Residues Gly85–Ser97 are compositionally biased toward low complexity. Residues Thr122–Thr132 show a composition bias toward polar residues. One can recognise a bZIP domain in the interval Asp137–Gln189. The basic motif stretch occupies residues Lys139 to Lys158. Residues Leu165–Leu186 form a leucine-zipper region. Residues Leu239 to Ser265 are disordered.

Expressed in roots, shoots and panicles.

It localises to the nucleus. Functionally, transcription regulator. The chain is Basic leucine zipper 6 (BZIP06) from Oryza sativa subsp. japonica (Rice).